The chain runs to 138 residues: Molluscan insulin-related peptide 5 (138 aa).

Residues 1–31 (MAGVRLVFTKAFMVTVLLTLLLNIGVKPAEG) form the signal peptide. Pyrrolidone carboxylic acid is present on Gln-32. Cystine bridges form between Cys-48/Cys-124, Cys-60/Cys-137, and Cys-123/Cys-128. The propeptide at 72 to 84 (DAETGWLLPETMV) is C-beta peptide like. Positions 87–111 (NAQTDLDDPLRNIKLSSESALTYLT) are cleaved as a propeptide — C-alpha peptide like. The residue at position 114 (Gln-114) is a Pyrrolidone carboxylic acid.

It belongs to the insulin family. As to quaternary structure, heterodimer of a B chain and an A chain linked by two disulfide bonds. In terms of tissue distribution, expressed in the cerebral light-green cells which are giant neuroendocrines cells involved in the control of growth.

The protein localises to the cytoplasmic vesicle. It localises to the secretory vesicle. This is Molluscan insulin-related peptide 5 from Lymnaea stagnalis (Great pond snail).